We begin with the raw amino-acid sequence, 464 residues long: UDP-glycosyltransferase 76C1 (464 aa).

UDP-alpha-D-glucose-binding positions include Ser279, 338-340 (APQ), 355-363 (HNGWNSTLE), and 377-380 (KWDQ).

The protein belongs to the UDP-glycosyltransferase family.

Inhibited by olomoucine and 3-isobutyl-1-methylxanthine. In terms of biological role, involved in the N-glucosylation of cytokinins. Catalyzes the formation of both the 7-N and the 9-N-glucosides. This chain is UDP-glycosyltransferase 76C1 (UGT76C1), found in Arabidopsis thaliana (Mouse-ear cress).